The primary structure comprises 259 residues: Dihydroorotate dehydrogenase B (NAD(+)), electron transfer subunit (259 aa).

The FAD-binding FR-type domain maps to 2–102; that stretch reads MQKQNMIVVN…LGPLGHGFPV (101 aa). FAD contacts are provided by residues 53 to 56, 70 to 72, and 77 to 78; these read RPIS, LYR, and GT. The [2Fe-2S] cluster site is built by Cys221, Cys226, Cys229, and Cys246.

This sequence belongs to the PyrK family. Heterotetramer of 2 PyrK and 2 PyrD type B subunits. The cofactor is [2Fe-2S] cluster. It depends on FAD as a cofactor.

It participates in pyrimidine metabolism; UMP biosynthesis via de novo pathway; orotate from (S)-dihydroorotate (NAD(+) route): step 1/1. In terms of biological role, responsible for channeling the electrons from the oxidation of dihydroorotate from the FMN redox center in the PyrD type B subunit to the ultimate electron acceptor NAD(+). This Bacillus cereus (strain 03BB102) protein is Dihydroorotate dehydrogenase B (NAD(+)), electron transfer subunit.